Reading from the N-terminus, the 166-residue chain is uncharacterized protein (166 aa).

This protein may be involved in virus assembly. Essential for virus function. This is an uncharacterized protein from Sulfolobus spindle-shape virus 1 (SSV1).